The sequence spans 1001 residues: Transcription-repair-coupling factor (1001 aa).

Residues 499–658 (DLSSHRVMDR…LSQIKGISSL (160 aa)) enclose the Helicase ATP-binding domain. 512-519 (GDVGFGKT) is a binding site for ATP. The DEEH box motif lies at 611-614 (DEEH). One can recognise a Helicase C-terminal domain in the interval 679–835 (LLKEIIYREL…SIAYHDLEIR (157 aa)).

This sequence in the N-terminal section; belongs to the UvrB family. It in the C-terminal section; belongs to the helicase family. RecG subfamily.

The protein localises to the cytoplasm. Functionally, couples transcription and DNA repair by recognizing RNA polymerase (RNAP) stalled at DNA lesions. Mediates ATP-dependent release of RNAP and its truncated transcript from the DNA, and recruitment of nucleotide excision repair machinery to the damaged site. The sequence is that of Transcription-repair-coupling factor from Helicobacter pylori (strain J99 / ATCC 700824) (Campylobacter pylori J99).